Consider the following 731-residue polypeptide: Lanosterol synthase ERG7 (731 aa).

Thr2 is modified (N-acetylthreonine). A PFTB 1 repeat occupies Arg125 to Gly167. Asp456 (proton donor) is an active-site residue. The PFTB 2 repeat unit spans residues Val615–Ala661.

Belongs to the terpene cyclase/mutase family.

It localises to the lipid droplet. The protein resides in the endoplasmic reticulum membrane. It carries out the reaction (S)-2,3-epoxysqualene = lanosterol. It participates in terpene metabolism; lanosterol biosynthesis; lanosterol from farnesyl diphosphate: step 3/3. Catalytic activity requires the presence of ERG27. Lanosterol synthase; part of the third module of ergosterol biosynthesis pathway that includes the late steps of the pathway. ERG7 catalyzes the cyclization of (S)-2,3 oxidosqualene to lanosterol, a reaction that forms the sterol core. The third module or late pathway involves the ergosterol synthesis itself through consecutive reactions that mainly occur in the endoplasmic reticulum (ER) membrane. Firstly, the squalene synthase ERG9 catalyzes the condensation of 2 farnesyl pyrophosphate moieties to form squalene, which is the precursor of all steroids. Squalene synthase is crucial for balancing the incorporation of farnesyl diphosphate (FPP) into sterol and nonsterol isoprene synthesis. Secondly, the squalene epoxidase ERG1 catalyzes the stereospecific oxidation of squalene to (S)-2,3-epoxysqualene, which is considered to be a rate-limiting enzyme in steroid biosynthesis. Then, the lanosterol synthase ERG7 catalyzes the cyclization of (S)-2,3 oxidosqualene to lanosterol, a reaction that forms the sterol core. In the next steps, lanosterol is transformed to zymosterol through a complex process involving various demethylation, reduction and desaturation reactions. The lanosterol 14-alpha-demethylase ERG11 (also known as CYP51) catalyzes C14-demethylation of lanosterol to produce 4,4'-dimethyl cholesta-8,14,24-triene-3-beta-ol, which is critical for ergosterol biosynthesis. The C-14 reductase ERG24 reduces the C14=C15 double bond of 4,4-dimethyl-cholesta-8,14,24-trienol to produce 4,4-dimethyl-cholesta-8,24-dienol. 4,4-dimethyl-cholesta-8,24-dienol is substrate of the C-4 demethylation complex ERG25-ERG26-ERG27 in which ERG25 catalyzes the three-step monooxygenation required for the demethylation of 4,4-dimethyl and 4alpha-methylsterols, ERG26 catalyzes the oxidative decarboxylation that results in a reduction of the 3-beta-hydroxy group at the C-3 carbon to an oxo group, and ERG27 is responsible for the reduction of the keto group on the C-3. ERG28 has a role as a scaffold to help anchor ERG25, ERG26 and ERG27 to the endoplasmic reticulum and ERG29 regulates the activity of the iron-containing C4-methylsterol oxidase ERG25. Then, the sterol 24-C-methyltransferase ERG6 catalyzes the methyl transfer from S-adenosyl-methionine to the C-24 of zymosterol to form fecosterol. The C-8 sterol isomerase ERG2 catalyzes the reaction which results in unsaturation at C-7 in the B ring of sterols and thus converts fecosterol to episterol. The sterol-C5-desaturase ERG3 then catalyzes the introduction of a C-5 double bond in the B ring to produce 5-dehydroepisterol. The C-22 sterol desaturase ERG5 further converts 5-dehydroepisterol into ergosta-5,7,22,24(28)-tetraen-3beta-ol by forming the C-22(23) double bond in the sterol side chain. Finally, ergosta-5,7,22,24(28)-tetraen-3beta-ol is substrate of the C-24(28) sterol reductase ERG4 to produce ergosterol. This is Lanosterol synthase ERG7 from Saccharomyces cerevisiae (strain ATCC 204508 / S288c) (Baker's yeast).